The sequence spans 58 residues: uncharacterized protein (58 aa).

This is an uncharacterized protein from Bacillus subtilis (strain 168).